A 1255-amino-acid chain; its full sequence is MLGVINRMAKKFNYKLPSMVALTLVGSAVTAHQVQAAETTQDQTTNKNVLDSNKVKATTEQAKAEVKNPTQNISGTQVYQDPAIVQPKTANNKTGNAQVSQKVDTAQVNGDTRANQSATTNNTQPVAKSTSTTAPKTNTNVTNAGYSLVDDEDDNSEHQINPELIKSAAKPAALETQYKAAAPKAKTEATPKVTTFSASAQPRSVAATPKTSLPKYKPQVNSSINDYIRKNNLKAPKIEEDYTSYFPKYAYRNGVGRPEGIVVHDTANDRSTINGEISYMKNNYQNAFVHAFVDGDRIIETAPTDYLSWGVGAVGNPRFINVEIVHTHDYASFARSMNNYADYAATQLQYYGLKPDSAEYDGNGTVWTHYAVSKYLGGTDHADPHGYLRSHNYSYDQLYDLINEKYLIKMGKVAPWGTQFTTTPTTPSKPTTPSKPSTGKLTVAANNGVAQIKPTNSGLYTTVYDKTGKATNEVQKTFAVSKTATLGNQKFYLVQDYNSGNKFGWVKEGDVVYNTAKSPVNVNQSYSIKSGTKLYTVPWGTSKQVAGSVSGSGNQTFKASKQQQIDKSIYLYGSVNGKSGWVSKAYLVDTAKPTPTPIPKPSTPTTNNKLTVSSLNGVAQINAKNNGLFTTVYDKTGKPTKEVQKTFAVTKEASLGGNKFYLVKDYNSPTLIGWVKQGDVIYNNAKSPVNVMQTYTVKPGTKLYSVPWGTYKQEAGAVSGTGNQTFKATKQQQIDKSIYLFGTVNGKSGWVSKAYLAVPAAPKKAVAQPKTAVKAYTVTKPQTTQTVSKIAQVKPNNTGIRASVYEKTAKNGAKYADRTFYVTKERAHGNETYVLLNNTSHNIPLGWFNVKDLNVQNLGKEVKTTQKYTVNKSNNGLSMVPWGTKNQVILTGNNIAQGTFNATKQVSVGKDVYLYGTINNRTGWVNAKDLTAPTAVKPTTSAAKDYNYTYVIKNGNGYYYVTPNSDTAKYSLKAFNEQPFAVVKEQVINGQTWYYGKLSNGKLAWIKSTDLAKELIKYNQTGMTLNQVAQIQAGLQYKPQVQRVPGKWTDANFNDVKHAMDTKRLAQDPALKYQFLRLDQPQNISIDKINQFLKGKGVLENQGAAFNKAAQMYGINEVYLISHALLETGNGTSQLAKGADVVNNKVVTNSNTKYHNVFGIAAYDNDPLREGIKYAKQAGWDTVSKAIVGGAKFIGNSYVKAGQNTLYKMRWNPAHPGTHQYATDVDWANINAKIIKGYYDKIGEVGKYFDIPQYK.

A signal peptide spans 1 to 36 (MLGVINRMAKKFNYKLPSMVALTLVGSAVTAHQVQA). Disordered stretches follow at residues 110–141 (GDTRANQSATTNNTQPVAKSTSTTAPKTNTNV) and 193–218 (VTTFSASAQPRSVAATPKTSLPKYKP). The tract at residues 199 to 775 (SAQPRSVAAT…VAQPKTAVKA (577 aa)) is N-acetylmuramoyl-L-alanine amidase. GW domains are found at residues 442 to 516 (TVAA…YNTA), 518 to 592 (SPVN…DTAK), 611 to 685 (TVSS…YNNA), 687 to 761 (SPVN…VPAA), 783 to 858 (TTQT…VQNL), 860 to 935 (KEVK…APTA), and 942 to 1016 (AAKD…KELI). The tract at residues 776–1255 (YTVTKPQTTQ…GKYFDIPQYK (480 aa)) is endo-beta-N-acetylglucosaminidase.

In the N-terminal section; belongs to the N-acetylmuramoyl-L-alanine amidase 2 family. This sequence in the C-terminal section; belongs to the glycosyl hydrolase 73 family. Oligomer; forms a ring structure at the cell surface which is important for efficient partitioning of daughter cells after cell division. Post-translationally, undergoes proteolytic processing to generate the two extracellular lytic enzymes, probably at the septal region on the cell surface.

It localises to the secreted. The enzyme catalyses Hydrolyzes the link between N-acetylmuramoyl residues and L-amino acid residues in certain cell-wall glycopeptides.. It carries out the reaction an N(4)-(oligosaccharide-(1-&gt;3)-[oligosaccharide-(1-&gt;6)]-beta-D-Man-(1-&gt;4)-beta-D-GlcNAc-(1-&gt;4)-alpha-D-GlcNAc)-L-asparaginyl-[protein] + H2O = an oligosaccharide-(1-&gt;3)-[oligosaccharide-(1-&gt;6)]-beta-D-Man-(1-&gt;4)-D-GlcNAc + N(4)-(N-acetyl-beta-D-glucosaminyl)-L-asparaginyl-[protein]. Endohydrolysis of the di-N-acetylchitobiosyl unit in high-mannose glycopeptides and glycoproteins containing the -[(Man)5(GlcNAc)2]-Asn structure. One N-acetyl-D-glucosamine residue remains attached to the protein; the rest of the oligosaccharide is released intact. Cleaves the peptidoglycan connecting the daughter cells at the end of the cell division cycle, resulting in the separation of the two newly divided cells. Acts as an autolysin in penicillin-induced lysis. The chain is Bifunctional autolysin (atl) from Staphylococcus aureus (strain Mu3 / ATCC 700698).